Here is a 291-residue protein sequence, read N- to C-terminus: Farnesyl diphosphate synthase (291 aa).

Isopentenyl diphosphate-binding residues include K44, R47, and H76. D83 and D89 together coordinate Mg(2+). R94 serves as a coordination point for (2E)-geranyl diphosphate. R95 is a binding site for isopentenyl diphosphate. K177, T178, Q215, and K232 together coordinate (2E)-geranyl diphosphate.

The protein belongs to the FPP/GGPP synthase family. Mg(2+) is required as a cofactor.

The protein resides in the cytoplasm. The enzyme catalyses isopentenyl diphosphate + (2E)-geranyl diphosphate = (2E,6E)-farnesyl diphosphate + diphosphate. The sequence is that of Farnesyl diphosphate synthase (fps) from Micrococcus luteus (Micrococcus lysodeikticus).